The sequence spans 201 residues: Small ribosomal subunit protein uS4c (201 aa).

Positions 15-44 (LGALPGLTNKRPRAGSDLRNQSRSGKKSQY) are disordered. In terms of domain architecture, S4 RNA-binding spans 89–150 (MRLDNILFRL…EQKSKVLIQN (62 aa)).

The protein belongs to the universal ribosomal protein uS4 family. As to quaternary structure, part of the 30S ribosomal subunit. Contacts protein S5. The interaction surface between S4 and S5 is involved in control of translational fidelity.

It localises to the plastid. The protein localises to the chloroplast. Its function is as follows. One of the primary rRNA binding proteins, it binds directly to 16S rRNA where it nucleates assembly of the body of the 30S subunit. Functionally, with S5 and S12 plays an important role in translational accuracy. The sequence is that of Small ribosomal subunit protein uS4c (rps4) from Lactuca sativa (Garden lettuce).